A 465-amino-acid polypeptide reads, in one-letter code: Adenosylhomocysteinase (465 aa).

The substrate site is built by T56, D131, and E191. 192-194 serves as a coordination point for NAD(+); the sequence is TTT. Residues K221 and D225 each contribute to the substrate site. NAD(+) contacts are provided by residues N226, 255 to 260, E278, N313, 334 to 336, and N379; these read GYGNVG and IGH.

The protein belongs to the adenosylhomocysteinase family. It depends on NAD(+) as a cofactor.

The protein localises to the cytoplasm. The catalysed reaction is S-adenosyl-L-homocysteine + H2O = L-homocysteine + adenosine. It participates in amino-acid biosynthesis; L-homocysteine biosynthesis; L-homocysteine from S-adenosyl-L-homocysteine: step 1/1. Its function is as follows. May play a key role in the regulation of the intracellular concentration of adenosylhomocysteine. The protein is Adenosylhomocysteinase of Bartonella quintana (strain Toulouse) (Rochalimaea quintana).